Consider the following 892-residue polypeptide: Nitrogen assimilation transcription factor nirA (892 aa).

Positions 1-32 (MGEKLDPELSSDGPHTKSSSKGQGTSTDNAPA) are disordered. Positions 16–27 (TKSSSKGQGTST) are enriched in low complexity. The zn(2)-C6 fungal-type DNA-binding region spans 42–70 (CIACRRRKSKCDGNLPSCAACSSVYHTTC). 3 disordered regions span residues 646 to 714 (GPWD…SGPV), 731 to 761 (AHNE…SAQE), and 842 to 892 (PNIP…SFQR). Positions 649–674 (DQAASPSTTSDSPPSVSSQSVVATTD) are enriched in low complexity. Polar residues-rich tracts occupy residues 675-714 (LSQP…SGPV), 746-761 (VSTS…SAQE), and 876-892 (NVNS…SFQR).

It localises to the nucleus. Its function is as follows. Pathway-specific regulatory gene of nitrate assimilation; it activates the transcription of the genes for nitrate and nitrite reductases (niaD and niiA). This Emericella nidulans (strain FGSC A4 / ATCC 38163 / CBS 112.46 / NRRL 194 / M139) (Aspergillus nidulans) protein is Nitrogen assimilation transcription factor nirA (nirA).